The following is a 651-amino-acid chain: Acetyl-coenzyme A synthetase (651 aa).

CoA contacts are provided by residues 189 to 192, threonine 311, and asparagine 335; that span reads RGGK. ATP is bound by residues 387-389, 411-416, aspartate 500, and arginine 515; these read GEP and DTWWQT. Serine 523 lines the CoA pocket. Position 526 (arginine 526) interacts with ATP. Residues valine 537, histidine 539, and valine 542 each coordinate Mg(2+). Arginine 586 is a binding site for CoA. Lysine 611 carries the N6-acetyllysine modification.

Belongs to the ATP-dependent AMP-binding enzyme family. Mg(2+) serves as cofactor. Acetylated. Deacetylation by the SIR2-homolog deacetylase activates the enzyme.

It carries out the reaction acetate + ATP + CoA = acetyl-CoA + AMP + diphosphate. Its function is as follows. Catalyzes the conversion of acetate into acetyl-CoA (AcCoA), an essential intermediate at the junction of anabolic and catabolic pathways. AcsA undergoes a two-step reaction. In the first half reaction, AcsA combines acetate with ATP to form acetyl-adenylate (AcAMP) intermediate. In the second half reaction, it can then transfer the acetyl group from AcAMP to the sulfhydryl group of CoA, forming the product AcCoA. This Brucella suis (strain ATCC 23445 / NCTC 10510) protein is Acetyl-coenzyme A synthetase.